Reading from the N-terminus, the 238-residue chain is Ubiquinone biosynthesis O-methyltransferase (238 aa).

4 residues coordinate S-adenosyl-L-methionine: Arg40, Gly59, Asp80, and Met124.

Belongs to the methyltransferase superfamily. UbiG/COQ3 family.

It catalyses the reaction a 3-demethylubiquinol + S-adenosyl-L-methionine = a ubiquinol + S-adenosyl-L-homocysteine + H(+). The catalysed reaction is a 3-(all-trans-polyprenyl)benzene-1,2-diol + S-adenosyl-L-methionine = a 2-methoxy-6-(all-trans-polyprenyl)phenol + S-adenosyl-L-homocysteine + H(+). Its pathway is cofactor biosynthesis; ubiquinone biosynthesis. O-methyltransferase that catalyzes the 2 O-methylation steps in the ubiquinone biosynthetic pathway. This Ralstonia nicotianae (strain ATCC BAA-1114 / GMI1000) (Ralstonia solanacearum) protein is Ubiquinone biosynthesis O-methyltransferase.